The sequence spans 150 residues: MLGAALRRCAVAATSRAGPRGLLHSAPNPGPAAAIQSVRCYSHGSSETDEEFDARWVTYFNKPDIDAWELRKGINTLVTYDLVPEPKIIDAALRACRRLNDFASTVRILEAVKDKAGPHKEIYPYVIQELRPTLNELGISTPEELGLDKV.

A mitochondrion-targeting transit peptide spans 1–41 (MLGAALRRCAVAATSRAGPRGLLHSAPNPGPAAAIQSVRCY). Positions 2–17 (LGAALRRCAVAATSRA) match the SIFI-degron motif. Residues K87 and K113 each carry the N6-acetyllysine modification. T141 is subject to Phosphothreonine.

Belongs to the cytochrome c oxidase subunit 5A family. In terms of assembly, component of the cytochrome c oxidase (complex IV, CIV), a multisubunit enzyme composed of 14 subunits. The complex is composed of a catalytic core of 3 subunits MT-CO1, MT-CO2 and MT-CO3, encoded in the mitochondrial DNA, and 11 supernumerary subunits COX4I, COX5A, COX5B, COX6A, COX6B, COX6C, COX7A, COX7B, COX7C, COX8 and NDUFA4, which are encoded in the nuclear genome. The complex exists as a monomer or a dimer and forms supercomplexes (SCs) in the inner mitochondrial membrane with NADH-ubiquinone oxidoreductase (complex I, CI) and ubiquinol-cytochrome c oxidoreductase (cytochrome b-c1 complex, complex III, CIII), resulting in different assemblies (supercomplex SCI(1)III(2)IV(1) and megacomplex MCI(2)III(2)IV(2)). Interacts with AFG1L. Interacts with RAB5IF. Post-translationally, in response to mitochondrial stress, the precursor protein is ubiquitinated by the SIFI complex in the cytoplasm before mitochondrial import, leading to its degradation. Within the SIFI complex, UBR4 initiates ubiquitin chain that are further elongated or branched by KCMF1.

The protein localises to the mitochondrion inner membrane. It functions in the pathway energy metabolism; oxidative phosphorylation. In terms of biological role, component of the cytochrome c oxidase, the last enzyme in the mitochondrial electron transport chain which drives oxidative phosphorylation. The respiratory chain contains 3 multisubunit complexes succinate dehydrogenase (complex II, CII), ubiquinol-cytochrome c oxidoreductase (cytochrome b-c1 complex, complex III, CIII) and cytochrome c oxidase (complex IV, CIV), that cooperate to transfer electrons derived from NADH and succinate to molecular oxygen, creating an electrochemical gradient over the inner membrane that drives transmembrane transport and the ATP synthase. Cytochrome c oxidase is the component of the respiratory chain that catalyzes the reduction of oxygen to water. Electrons originating from reduced cytochrome c in the intermembrane space (IMS) are transferred via the dinuclear copper A center (CU(A)) of subunit 2 and heme A of subunit 1 to the active site in subunit 1, a binuclear center (BNC) formed by heme A3 and copper B (CU(B)). The BNC reduces molecular oxygen to 2 water molecules using 4 electrons from cytochrome c in the IMS and 4 protons from the mitochondrial matrix. This chain is Cytochrome c oxidase subunit 5A, mitochondrial (COX5A), found in Saguinus labiatus (Red-chested mustached tamarin).